The chain runs to 449 residues: Probable glycine dehydrogenase (decarboxylating) subunit 1 (449 aa).

This sequence belongs to the GcvP family. N-terminal subunit subfamily. In terms of assembly, the glycine cleavage system is composed of four proteins: P, T, L and H. In this organism, the P 'protein' is a heterodimer of two subunits.

It carries out the reaction N(6)-[(R)-lipoyl]-L-lysyl-[glycine-cleavage complex H protein] + glycine + H(+) = N(6)-[(R)-S(8)-aminomethyldihydrolipoyl]-L-lysyl-[glycine-cleavage complex H protein] + CO2. In terms of biological role, the glycine cleavage system catalyzes the degradation of glycine. The P protein binds the alpha-amino group of glycine through its pyridoxal phosphate cofactor; CO(2) is released and the remaining methylamine moiety is then transferred to the lipoamide cofactor of the H protein. The sequence is that of Probable glycine dehydrogenase (decarboxylating) subunit 1 from Oceanobacillus iheyensis (strain DSM 14371 / CIP 107618 / JCM 11309 / KCTC 3954 / HTE831).